The following is a 186-amino-acid chain: MTLLVGLGNPTLRYAHTRHNVGFDILDSLVSGLNLSFTFSPKHNAHLCIYKDFILLKPQTYMNLSGESVLSTKNFYKPKELLIVHDDLDLPLGVVKFKNGGGNGGHNGLKSIDALCSNAYYRLRVGISKGTNATEHVLSKFNENEEPLKNAVFEHAKNALKFFIECNDFNAMCNHFTLKKPLAIET.

Tyr-14 provides a ligand contact to tRNA. His-19 functions as the Proton acceptor in the catalytic mechanism. TRNA contacts are provided by Tyr-61, Asn-63, and Asn-107.

This sequence belongs to the PTH family. As to quaternary structure, monomer.

Its subcellular location is the cytoplasm. It catalyses the reaction an N-acyl-L-alpha-aminoacyl-tRNA + H2O = an N-acyl-L-amino acid + a tRNA + H(+). Functionally, hydrolyzes ribosome-free peptidyl-tRNAs (with 1 or more amino acids incorporated), which drop off the ribosome during protein synthesis, or as a result of ribosome stalling. Catalyzes the release of premature peptidyl moieties from peptidyl-tRNA molecules trapped in stalled 50S ribosomal subunits, and thus maintains levels of free tRNAs and 50S ribosomes. The chain is Peptidyl-tRNA hydrolase from Helicobacter acinonychis (strain Sheeba).